An 878-amino-acid chain; its full sequence is Leucine--tRNA ligase (878 aa).

A 'HIGH' region motif is present at residues 43-54 (PYPSAQGLHVGH). The 'KMSKS' region signature appears at 634-638 (KMSKA). Lys637 provides a ligand contact to ATP.

The protein belongs to the class-I aminoacyl-tRNA synthetase family.

Its subcellular location is the cytoplasm. It catalyses the reaction tRNA(Leu) + L-leucine + ATP = L-leucyl-tRNA(Leu) + AMP + diphosphate. The protein is Leucine--tRNA ligase of Treponema pallidum subsp. pallidum (strain SS14).